Consider the following 402-residue polypeptide: Serine/threonine transporter SstT (402 aa).

The next 8 membrane-spanning stretches (helical) occupy residues 17-37 (IAIG…ITVI), 44-64 (FVGG…ANAL), 78-98 (IIVL…ISHY), 138-158 (ALSQ…GFAM), 179-199 (IVRW…FDTI), 212-232 (VLIL…NPII), 295-315 (MAGA…TLGI), and 336-356 (ASGI…LFGI).

It belongs to the dicarboxylate/amino acid:cation symporter (DAACS) (TC 2.A.23) family.

Its subcellular location is the cell membrane. It catalyses the reaction L-serine(in) + Na(+)(in) = L-serine(out) + Na(+)(out). It carries out the reaction L-threonine(in) + Na(+)(in) = L-threonine(out) + Na(+)(out). Functionally, involved in the import of serine and threonine into the cell, with the concomitant import of sodium (symport system). This is Serine/threonine transporter SstT from Streptococcus thermophilus (strain ATCC BAA-250 / LMG 18311).